The following is a 462-amino-acid chain: Argininosuccinate lyase (462 aa).

It belongs to the lyase 1 family. Argininosuccinate lyase subfamily.

Its subcellular location is the cytoplasm. The enzyme catalyses 2-(N(omega)-L-arginino)succinate = fumarate + L-arginine. It participates in amino-acid biosynthesis; L-arginine biosynthesis; L-arginine from L-ornithine and carbamoyl phosphate: step 3/3. The protein is Argininosuccinate lyase of Methylobacterium nodulans (strain LMG 21967 / CNCM I-2342 / ORS 2060).